Consider the following 103-residue polypeptide: Large ribosomal subunit protein bL21 (103 aa).

This sequence belongs to the bacterial ribosomal protein bL21 family. In terms of assembly, part of the 50S ribosomal subunit. Contacts protein L20.

In terms of biological role, this protein binds to 23S rRNA in the presence of protein L20. The chain is Large ribosomal subunit protein bL21 from Rhodococcus jostii (strain RHA1).